The primary structure comprises 198 residues: Probable chemoreceptor glutamine deamidase CheD (198 aa).

The protein belongs to the CheD family.

It carries out the reaction L-glutaminyl-[protein] + H2O = L-glutamyl-[protein] + NH4(+). Functionally, probably deamidates glutamine residues to glutamate on methyl-accepting chemotaxis receptors (MCPs), playing an important role in chemotaxis. This is Probable chemoreceptor glutamine deamidase CheD from Xanthomonas euvesicatoria pv. vesicatoria (strain 85-10) (Xanthomonas campestris pv. vesicatoria).